The primary structure comprises 680 residues: Outer dense fiber protein 2 (680 aa).

The interval 27-46 (LPKPSATSSQKSHKRGMKGD) is disordered. Phosphoserine occurs at positions 68 and 69. The residue at position 87 (Thr-87) is a Phosphothreonine. The residue at position 90 (Ser-90) is a Phosphoserine; by TSSK4. Phosphoserine is present on residues Ser-101 and Ser-104. Position 105 is a phosphothreonine (Thr-105). Phosphoserine occurs at positions 110 and 124. A Glycyl lysine isopeptide (Lys-Gly) (interchain with G-Cter in SUMO2) cross-link involves residue Lys-133. Ser-134 is subject to Phosphoserine. The stretch at 139–212 (QKGERQMAKR…MSKLVEAEMD (74 aa)) forms a coiled coil. Thr-226 is subject to Phosphothreonine. Ser-256 is modified (phosphoserine). Coiled coils occupy residues 275-418 (KEDS…AEQL) and 456-630 (EIIV…SDLR). The tract at residues 387-410 (KQKGDRDKESLKKAIRAQKERAEK) is disordered. Ser-627 is subject to Phosphoserine. The interval 632-680 (RETGGDQCPEYRVPTGDCQEGGGNPPVPAAARGENTGMWDPGKAVGERH) is disordered.

It belongs to the ODF2 family. In terms of assembly, self-associates. Associates with microtubules and forms a fibrillar structure partially linked to the microtubule network. Interacts via its C-terminus with PLK1. Interacts with ODF1. Interacts with MARK4; the interaction is required for localization of ODF2 to centrioles. Interacts with TSSK4. Interacts with AKNA. Interacts with QRICH2. Interacts with CFAP58. Interacts with BBOF1. Interacts with CCDC38. Interacts with CCDC42. Post-translationally, tyrosine phosphorylated. Phosphorylated on Ser-90 by TSSK4.

It localises to the cytoplasm. The protein resides in the cytoskeleton. Its subcellular location is the microtubule organizing center. It is found in the centrosome. The protein localises to the cell projection. It localises to the cilium. The protein resides in the centriole. Its subcellular location is the spindle pole. It is found in the flagellum. Its function is as follows. Seems to be a major component of sperm tail outer dense fibers (ODF). ODFs are filamentous structures located on the outside of the axoneme in the midpiece and principal piece of the mammalian sperm tail and may help to maintain the passive elastic structures and elastic recoil of the sperm tail. May have a modulating influence on sperm motility. Functions as a general scaffold protein that is specifically localized at the distal/subdistal appendages of mother centrioles. Component of the centrosome matrix required for the localization of PLK1 and NIN to the centrosomes. Required for the formation and/or maintenance of normal CETN1 assembly. This is Outer dense fiber protein 2 (ODF2) from Pongo abelii (Sumatran orangutan).